Here is a 287-residue protein sequence, read N- to C-terminus: tRNA selenocysteine 1-associated protein 1 (287 aa).

RRM domains are found at residues 3-86 and 96-175; these read ASLW…YATY and YSLF…VAIP.

The protein belongs to the RRM TRSPAP family. Component of the tRNA(Sec) complex composed at least of EEFSEC, SECISBP2, SEPHS1, SEPSECS, TRNAU1AP and tRNA(Sec). Found in a complex with tRNA(Sec). Interacts with SEPSECS. Associates with mRNP and/or polysomes. Found in a complex with EEFSEC, SECISBP2, TRNAU1AP and tRNA(Sec).

It localises to the nucleus. It is found in the cytoplasm. In terms of biological role, involved in the early steps of selenocysteine biosynthesis and tRNA(Sec) charging to the later steps resulting in the cotranslational incorporation of selenocysteine into selenoproteins. Stabilizes the SECISBP2, EEFSEC and tRNA(Sec) complex. May be involved in the methylation of tRNA(Sec). Enhances efficiency of selenoproteins synthesis. The polypeptide is tRNA selenocysteine 1-associated protein 1 (TRNAU1AP) (Homo sapiens (Human)).